The sequence spans 334 residues: MPIRHCIVHLIDKKPDGTPAVLHARDSELAESAAIENMLADLNESYNAKQGKAWGLFHPESGAFPFSGWLKEYMEGGKDFTAFSKVAVEHLQKLMEESNLSVGGHVLFAHYQQGMTDYLAIALLHHSEGVAVTDQLDVTPSRHLDLGQLHLAARINVSEWQNNKQSKQYISFIKGKNGKKVSEYFRDFIGCQEGVDGPGETRTLLKAFSDFVESEDLPEDSAREKTKTLVDYASSQAKLGEPMGLEELSELIDEERPKAFYDHIRNKDYGLSPEIPADKRTLNQFRRFTGRAEGLSISFEAHLLGSKIEYDEEAGTLVIKGLPTSLTDQLKRRN.

This sequence belongs to the YejK family.

It is found in the cytoplasm. The protein resides in the nucleoid. This Pseudomonas fluorescens (strain Pf0-1) protein is Nucleoid-associated protein Pfl01_0983.